A 414-amino-acid polypeptide reads, in one-letter code: tRNA N6-adenosine threonylcarbamoyltransferase, mitochondrial (414 aa).

Residues 1–29 (MLILTKTAGVFFKPSKRKVYEFLRSFNFH) constitute a mitochondrion transit peptide. Residues Lys-74 and Lys-140 each carry the N6-acetyllysine modification. Residues His-147 and His-151 each contribute to the a divalent metal cation site. Substrate-binding positions include 169–173 (LISGG) and Asp-202. Lys-203 bears the N6-acetyllysine mark. Substrate-binding residues include Gly-222 and Glu-226. N6-acetyllysine occurs at positions 230, 240, and 299. Substrate contacts are provided by residues 329-330 (SN) and Thr-357. Asp-358 provides a ligand contact to a divalent metal cation.

Belongs to the KAE1 / TsaD family. As to quaternary structure, monomer. A divalent metal cation is required as a cofactor. Widely expressed, with maximum expression in pituitary gland, prostate, rectum and uterus.

Its subcellular location is the mitochondrion. The enzyme catalyses L-threonylcarbamoyladenylate + adenosine(37) in tRNA = N(6)-L-threonylcarbamoyladenosine(37) in tRNA + AMP + H(+). Its function is as follows. Required for the formation of a threonylcarbamoyl group on adenosine at position 37 (t(6)A37) in mitochondrial tRNAs that read codons beginning with adenine. Probably involved in the transfer of the threonylcarbamoyl moiety of threonylcarbamoyl-AMP (TC-AMP) to the N6 group of A37. Involved in mitochondrial genome maintenance. This is tRNA N6-adenosine threonylcarbamoyltransferase, mitochondrial from Homo sapiens (Human).